The chain runs to 332 residues: Receptor polysaccharide phosphotransferase WefC (332 aa).

It belongs to the stealth family.

The protein is Receptor polysaccharide phosphotransferase WefC (wefC) of Streptococcus oralis.